The primary structure comprises 132 residues: Large ribosomal subunit protein uL14 (132 aa).

This sequence belongs to the universal ribosomal protein uL14 family. As to quaternary structure, part of the 50S ribosomal subunit. Forms a cluster with proteins L3 and L24e, part of which may contact the 16S rRNA in 2 intersubunit bridges.

In terms of biological role, binds to 23S rRNA. Forms part of two intersubunit bridges in the 70S ribosome. This Halorubrum lacusprofundi (strain ATCC 49239 / DSM 5036 / JCM 8891 / ACAM 34) protein is Large ribosomal subunit protein uL14.